The chain runs to 247 residues: Probable transcriptional regulatory protein BHWA1_01533 (247 aa).

The interval 1 to 22 is disordered; sequence MSGHSKWASIKHKKAANDSKKG.

The protein belongs to the TACO1 family.

The protein localises to the cytoplasm. This is Probable transcriptional regulatory protein BHWA1_01533 from Brachyspira hyodysenteriae (strain ATCC 49526 / WA1).